We begin with the raw amino-acid sequence, 212 residues long: Dephospho-CoA kinase (212 aa).

One can recognise a DPCK domain in the interval 3–204; that stretch reads ILGLTGSIGM…GSRPAAPVGG (202 aa). Position 11 to 16 (11 to 16) interacts with ATP; that stretch reads GMGKST.

It belongs to the CoaE family.

Its subcellular location is the cytoplasm. It carries out the reaction 3'-dephospho-CoA + ATP = ADP + CoA + H(+). It functions in the pathway cofactor biosynthesis; coenzyme A biosynthesis; CoA from (R)-pantothenate: step 5/5. Its function is as follows. Catalyzes the phosphorylation of the 3'-hydroxyl group of dephosphocoenzyme A to form coenzyme A. This chain is Dephospho-CoA kinase, found in Paramagnetospirillum magneticum (strain ATCC 700264 / AMB-1) (Magnetospirillum magneticum).